Here is a 319-residue protein sequence, read N- to C-terminus: BTB/POZ domain-containing adapter for CUL3-mediated RhoA degradation protein 2 (319 aa).

Residues 31 to 99 (KYIRLNVGGC…LRDDTIALPK (69 aa)) form the BTB domain.

The protein belongs to the BACURD family. In terms of assembly, component of the BCR(TNFAIP1) E3 ubiquitin ligase complex, at least composed of cul3, tnfaip1/bacurd2 and rbx1.

The protein resides in the cytoplasm. It localises to the nucleus. The protein localises to the endosome. It functions in the pathway protein modification; protein ubiquitination. Substrate-specific adapter of a BCR (BTB-CUL3-RBX1) E3 ubiquitin-protein ligase complex involved in regulation of cytoskeleton structure. The BCR(TNFAIP1) E3 ubiquitin ligase complex mediates the ubiquitination of target proteins, leading to their degradation by the proteasome. The protein is BTB/POZ domain-containing adapter for CUL3-mediated RhoA degradation protein 2 (tnfaip1) of Xenopus laevis (African clawed frog).